A 185-amino-acid polypeptide reads, in one-letter code: Elongation factor P (185 aa).

This sequence belongs to the elongation factor P family.

It is found in the cytoplasm. Its pathway is protein biosynthesis; polypeptide chain elongation. Functionally, involved in peptide bond synthesis. Stimulates efficient translation and peptide-bond synthesis on native or reconstituted 70S ribosomes in vitro. Probably functions indirectly by altering the affinity of the ribosome for aminoacyl-tRNA, thus increasing their reactivity as acceptors for peptidyl transferase. This chain is Elongation factor P, found in Clostridium perfringens (strain ATCC 13124 / DSM 756 / JCM 1290 / NCIMB 6125 / NCTC 8237 / Type A).